A 302-amino-acid chain; its full sequence is Transcription factor bHLH7 (302 aa).

Residues 124–154 form a disordered region; it reads QPMSQPAPPMPHQQSTIRPRVRARRGQATDP. In terms of domain architecture, bHLH spans 150–199; the sequence is QATDPHSIAERLRRERIAERIRSLQELVPTVNKTDRAAMIDEIVDYVKFL.

Homodimer. In terms of tissue distribution, expressed constitutively in roots, leaves, stems and flowers.

It localises to the nucleus. This Arabidopsis thaliana (Mouse-ear cress) protein is Transcription factor bHLH7 (BHLH7).